The primary structure comprises 88 residues: Small ribosomal subunit protein uS15 (88 aa).

This sequence belongs to the universal ribosomal protein uS15 family. As to quaternary structure, part of the 30S ribosomal subunit. Forms a bridge to the 50S subunit in the 70S ribosome, contacting the 23S rRNA.

Its function is as follows. One of the primary rRNA binding proteins, it binds directly to 16S rRNA where it helps nucleate assembly of the platform of the 30S subunit by binding and bridging several RNA helices of the 16S rRNA. In terms of biological role, forms an intersubunit bridge (bridge B4) with the 23S rRNA of the 50S subunit in the ribosome. This is Small ribosomal subunit protein uS15 from Geotalea uraniireducens (strain Rf4) (Geobacter uraniireducens).